Consider the following 205-residue polypeptide: Glycerol-3-phosphate acyltransferase (205 aa).

The next 5 helical transmembrane spans lie at 6–26 (STVLFAIGAYLIGSISFAVVV), 55–75 (KAAILTLLGDGAKGFVAVWLV), 89–109 (VALVAIAVFLGHLWPIFFRFV), 120–140 (ILLALNGWLGLATLITWLVIA), and 162–182 (ALMFGPDAILLAVVAMSVLLI).

It belongs to the PlsY family. In terms of assembly, probably interacts with PlsX.

It localises to the cell inner membrane. It carries out the reaction an acyl phosphate + sn-glycerol 3-phosphate = a 1-acyl-sn-glycero-3-phosphate + phosphate. It functions in the pathway lipid metabolism; phospholipid metabolism. In terms of biological role, catalyzes the transfer of an acyl group from acyl-phosphate (acyl-PO(4)) to glycerol-3-phosphate (G3P) to form lysophosphatidic acid (LPA). This enzyme utilizes acyl-phosphate as fatty acyl donor, but not acyl-CoA or acyl-ACP. This Herminiimonas arsenicoxydans protein is Glycerol-3-phosphate acyltransferase.